The following is a 129-amino-acid chain: Small ribosomal subunit protein uS11 (129 aa).

The protein belongs to the universal ribosomal protein uS11 family. As to quaternary structure, part of the 30S ribosomal subunit. Interacts with proteins S7 and S18. Binds to IF-3.

Its function is as follows. Located on the platform of the 30S subunit, it bridges several disparate RNA helices of the 16S rRNA. Forms part of the Shine-Dalgarno cleft in the 70S ribosome. This is Small ribosomal subunit protein uS11 from Novosphingobium aromaticivorans (strain ATCC 700278 / DSM 12444 / CCUG 56034 / CIP 105152 / NBRC 16084 / F199).